Here is a 505-residue protein sequence, read N- to C-terminus: Maturase K (505 aa).

It belongs to the intron maturase 2 family. MatK subfamily.

It localises to the plastid. It is found in the chloroplast. Its function is as follows. Usually encoded in the trnK tRNA gene intron. Probably assists in splicing its own and other chloroplast group II introns. The protein is Maturase K of Portulacaria afra (Elephant's food).